Here is a 458-residue protein sequence, read N- to C-terminus: Argininosuccinate lyase (458 aa).

It belongs to the lyase 1 family. Argininosuccinate lyase subfamily.

The protein localises to the cytoplasm. It catalyses the reaction 2-(N(omega)-L-arginino)succinate = fumarate + L-arginine. Its pathway is amino-acid biosynthesis; L-arginine biosynthesis; L-arginine from L-ornithine and carbamoyl phosphate: step 3/3. This is Argininosuccinate lyase from Salmonella newport (strain SL254).